A 248-amino-acid chain; its full sequence is Homeobox-leucine zipper protein HOX15 (248 aa).

The segment at 1 to 44 (MAQDDEDVGLALGLSLGSGGHRRQRESRDEAPSSAAASLLTLRL) is disordered. Residues 32–44 (PSSAAASLLTLRL) show a composition bias toward low complexity. The homeobox DNA-binding region spans 91-150 (NSRKKLRLSKEQSALLEDRFKEHSTLNPKQKVALAKQLNLRPRQVEVWFQNRRARTKLKQ). A leucine-zipper region spans residues 149-193 (KQTEVDCELLKRCCETLTEENRRLHRELQQLRALTHSTAAGFFMA). The interval 223–248 (PTAAADRTNKPTAPHLFSPFAKSAAC) is disordered.

It belongs to the HD-ZIP homeobox family. Class II subfamily. As to expression, expressed in seedlings, stems, leaf blades and panicles.

It localises to the nucleus. Functionally, probable transcription factor. The protein is Homeobox-leucine zipper protein HOX15 (HOX15) of Oryza sativa subsp. indica (Rice).